A 48-amino-acid polypeptide reads, in one-letter code: MPQMIPFFFMNQLTYGFTFILTILFLTSYVFLPMILRLYISRLYISKL.

The helical transmembrane segment at 13–35 threads the bilayer; it reads LTYGFTFILTILFLTSYVFLPMI.

This sequence belongs to the ATPase protein 8 family. F-type ATPases have 2 components, CF(1) - the catalytic core - and CF(0) - the membrane proton channel. In yeast, the dimeric form of ATP synthase consists of 18 polypeptides: alpha, beta, gamma, delta, epsilon, 4 (B), 5 (OSCP), 6 (A), 8, 9 (C), d, E (Tim11), f, g, h, i, j and k.

Its subcellular location is the mitochondrion membrane. Mitochondrial membrane ATP synthase (F(1)F(0) ATP synthase or Complex V) produces ATP from ADP in the presence of a proton gradient across the membrane which is generated by electron transport complexes of the respiratory chain. F-type ATPases consist of two structural domains, F(1) - containing the extramembraneous catalytic core and F(0) - containing the membrane proton channel, linked together by a central stalk and a peripheral stalk. During catalysis, ATP synthesis in the catalytic domain of F(1) is coupled via a rotary mechanism of the central stalk subunits to proton translocation. Part of the complex F(0) domain. Minor subunit located with subunit a in the membrane. The protein is ATP synthase protein 8 (ATP8) of Eremothecium gossypii (strain ATCC 10895 / CBS 109.51 / FGSC 9923 / NRRL Y-1056) (Yeast).